Reading from the N-terminus, the 129-residue chain is UPF0102 protein Clim_0016 (129 aa).

It belongs to the UPF0102 family.

In Chlorobium limicola (strain DSM 245 / NBRC 103803 / 6330), this protein is UPF0102 protein Clim_0016.